We begin with the raw amino-acid sequence, 309 residues long: Taste receptor type 2 member 31 (309 aa).

Residues Met1–Thr2 lie on the Extracellular side of the membrane. The helical transmembrane segment at Thr3–Ala23 threads the bilayer. At Asn24–Arg55 the chain is on the cytoplasmic side. Residues Ile56–Tyr76 form a helical membrane-spanning segment. The Extracellular portion of the chain corresponds to Ser77–Thr100. Residues Ser101 to Leu121 traverse the membrane as a helical segment. Over Lys122 to Lys126 the chain is Cytoplasmic. A helical membrane pass occupies residues Ser127 to Ile147. Over Asn148–Thr181 the chain is Extracellular. N-linked (GlcNAc...) asparagine glycosylation is present at Asn161. Residues Leu182–Leu202 form a helical membrane-spanning segment. Over Cys203–Gln229 the chain is Cytoplasmic. Residues Thr230–Trp250 form a helical membrane-spanning segment. Over Ser251–Pro259 the chain is Extracellular. A helical transmembrane segment spans residues Val260–Ile280. Over Trp281–Pro309 the chain is Cytoplasmic.

This sequence belongs to the G-protein coupled receptor T2R family.

The protein resides in the membrane. In terms of biological role, receptor that may play a role in the perception of bitterness and is gustducin-linked. May play a role in sensing the chemical composition of the gastrointestinal content. The activity of this receptor may stimulate alpha gustducin, mediate PLC-beta-2 activation and lead to the gating of TRPM5. The chain is Taste receptor type 2 member 31 (TAS2R31) from Gorilla gorilla gorilla (Western lowland gorilla).